The following is a 391-amino-acid chain: Phosphoglycerate kinase (391 aa).

Substrate is bound by residues D21–N23, R36, H59–R62, R113, and R146. Residues K197, E319, and G345–T348 each bind ATP.

It belongs to the phosphoglycerate kinase family. Monomer.

The protein resides in the cytoplasm. The enzyme catalyses (2R)-3-phosphoglycerate + ATP = (2R)-3-phospho-glyceroyl phosphate + ADP. The protein operates within carbohydrate degradation; glycolysis; pyruvate from D-glyceraldehyde 3-phosphate: step 2/5. The chain is Phosphoglycerate kinase from Xanthomonas euvesicatoria pv. vesicatoria (strain 85-10) (Xanthomonas campestris pv. vesicatoria).